We begin with the raw amino-acid sequence, 65 residues long: Carboxypeptidase A inhibitor (65 aa).

It belongs to the protease inhibitor I44 family.

It is found in the secreted. Its function is as follows. Inhibits carboxypeptidase A. The protein is Carboxypeptidase A inhibitor of Ascaris suum (Pig roundworm).